The primary structure comprises 190 residues: ATP synthase subunit delta (190 aa).

Belongs to the ATPase delta chain family. F-type ATPases have 2 components, F(1) - the catalytic core - and F(0) - the membrane proton channel. F(1) has five subunits: alpha(3), beta(3), gamma(1), delta(1), epsilon(1). F(0) has three main subunits: a(1), b(2) and c(10-14). The alpha and beta chains form an alternating ring which encloses part of the gamma chain. F(1) is attached to F(0) by a central stalk formed by the gamma and epsilon chains, while a peripheral stalk is formed by the delta and b chains.

It is found in the cell inner membrane. Its function is as follows. F(1)F(0) ATP synthase produces ATP from ADP in the presence of a proton or sodium gradient. F-type ATPases consist of two structural domains, F(1) containing the extramembraneous catalytic core and F(0) containing the membrane proton channel, linked together by a central stalk and a peripheral stalk. During catalysis, ATP synthesis in the catalytic domain of F(1) is coupled via a rotary mechanism of the central stalk subunits to proton translocation. This protein is part of the stalk that links CF(0) to CF(1). It either transmits conformational changes from CF(0) to CF(1) or is implicated in proton conduction. This Anaplasma marginale (strain Florida) protein is ATP synthase subunit delta.